The chain runs to 78 residues: TauPI-stichotoxin-Hcr2b (78 aa).

The signal sequence occupies residues M1–A22. A BPTI/Kunitz inhibitor domain is found at C26–C76. Cystine bridges form between C26/C76, C35/C59, and C51/C72.

The protein belongs to the venom Kunitz-type family. Sea anemone type 2 potassium channel toxin subfamily.

It localises to the secreted. The protein localises to the nematocyst. Its function is as follows. This protease inhibitor shows two different activities, it inhibits both the capsaicin receptor TRPV1 and serine proteases. It partially (max 50%) and reversibly inhibits capsaicin-induced response of TRPV1 (IC(50)=54 nM), a receptor of the pain pathway. The second activity is a weak inhibition of trypsin and chymotrypsin activity (Ki=1 uM and Ki=5 uM, respectively). In vivo, it shows antinociceptive and analgesic activities. It significantly prolongs tail-flick latency and reduces capsaicin-induced acute pain. In vivo, unlike other TRPV1 antagonists whose activity is associated with hyperthermia, this protein has the remarkable feature of dropping core body temperature. This is TauPI-stichotoxin-Hcr2b from Radianthus crispa (Leathery sea anemone).